The sequence spans 645 residues: Chlorophyllide a oxygenase, chloroplastic (645 aa).

Residues 1 to 46 form a disordered region; the sequence is MLPASLQRKAAAVGGRGPTNQSRVAVRVSAQPKEAPPASTPIVEDP. Residues 105 to 218 adopt a coiled-coil conformation; that stretch reads QARQKLEYLR…RKASDLDIKE (114 aa). Residues 258–287 form a disordered region; sequence ATTVTQEVPSTSYGTPVDRAPRRSKAAIRR. Over residues 259 to 271 the composition is skewed to polar residues; that stretch reads TTVTQEVPSTSYG. The region spanning 305 to 406 is the Rieske domain; the sequence is WYPAEFSARL…CAEKDGFIWV (102 aa). [2Fe-2S] cluster is bound by residues C346, H348, C365, and H368. Positions 446, 450, 453, and 458 each coordinate Fe cation.

It localises to the plastid. The protein resides in the chloroplast inner membrane. Its subcellular location is the chloroplast thylakoid membrane. It catalyses the reaction chlorophyllide a + 2 NADPH + 2 O2 + 2 H(+) = chlorophyllide b + 2 NADP(+) + 3 H2O. In terms of biological role, catalyzes a two-step oxygenase reaction involved in the synthesis of chlorophyll b. Acts specifically on the non-esterified chlorophyllide a and not on chlorophyll a. This Chlamydomonas reinhardtii (Chlamydomonas smithii) protein is Chlorophyllide a oxygenase, chloroplastic (CAO).